The chain runs to 106 residues: Ig kappa-b4 chain C region (106 aa).

In terms of domain architecture, Ig-like spans 6-99 (PSVLLFPPSK…VQGSASPIVQ (94 aa)). Cys27 and Cys87 form a disulfide bridge. A compositionally biased stretch (polar residues) spans 48 to 64 (QQSGIENSKTPQSPEDN). Residues 48–67 (QQSGIENSKTPQSPEDNTYS) are disordered.

This Oryctolagus cuniculus (Rabbit) protein is Ig kappa-b4 chain C region (K-BAS).